Consider the following 141-residue polypeptide: Nucleoside diphosphate kinase (141 aa).

6 residues coordinate ATP: Lys11, Phe59, Arg87, Thr93, Arg104, and Asn114. The active-site Pros-phosphohistidine intermediate is the His117.

The protein belongs to the NDK family. In terms of assembly, homotetramer. Mg(2+) is required as a cofactor.

Its subcellular location is the cytoplasm. The enzyme catalyses a 2'-deoxyribonucleoside 5'-diphosphate + ATP = a 2'-deoxyribonucleoside 5'-triphosphate + ADP. It carries out the reaction a ribonucleoside 5'-diphosphate + ATP = a ribonucleoside 5'-triphosphate + ADP. Major role in the synthesis of nucleoside triphosphates other than ATP. The ATP gamma phosphate is transferred to the NDP beta phosphate via a ping-pong mechanism, using a phosphorylated active-site intermediate. The polypeptide is Nucleoside diphosphate kinase (Paraburkholderia phymatum (strain DSM 17167 / CIP 108236 / LMG 21445 / STM815) (Burkholderia phymatum)).